The following is a 290-amino-acid chain: Probable porphobilinogen deaminase (290 aa).

Cys-230 carries the post-translational modification S-(dipyrrolylmethanemethyl)cysteine.

The protein belongs to the HMBS family. Requires dipyrromethane as cofactor.

It catalyses the reaction 4 porphobilinogen + H2O = hydroxymethylbilane + 4 NH4(+). The protein operates within porphyrin-containing compound metabolism; protoporphyrin-IX biosynthesis; coproporphyrinogen-III from 5-aminolevulinate: step 2/4. Functionally, tetrapolymerization of the monopyrrole PBG into the hydroxymethylbilane pre-uroporphyrinogen in several discrete steps. The chain is Probable porphobilinogen deaminase from Metallosphaera sedula (strain ATCC 51363 / DSM 5348 / JCM 9185 / NBRC 15509 / TH2).